The following is a 177-amino-acid chain: Dual-action ribosomal maturation protein DarP (177 aa).

The protein belongs to the DarP family.

It is found in the cytoplasm. Functionally, member of a network of 50S ribosomal subunit biogenesis factors which assembles along the 30S-50S interface, preventing incorrect 23S rRNA structures from forming. Promotes peptidyl transferase center (PTC) maturation. This chain is Dual-action ribosomal maturation protein DarP, found in Glaesserella parasuis serovar 5 (strain SH0165) (Haemophilus parasuis).